The sequence spans 396 residues: Mevalonate kinase (396 aa).

ATP-binding positions include Lys13, Asn55, Ser135, and 140–146 (GAGLGSS). Ser146 serves as the catalytic Proton donor. Mg(2+) contacts are provided by Ser146 and Glu193. Asp204 acts as the Proton acceptor in catalysis.

It belongs to the GHMP kinase family. Mevalonate kinase subfamily. Homodimer. Mg(2+) serves as cofactor.

The protein localises to the cytoplasm. It is found in the peroxisome. It catalyses the reaction (R)-mevalonate + ATP = (R)-5-phosphomevalonate + ADP + H(+). Its pathway is isoprenoid biosynthesis; isopentenyl diphosphate biosynthesis via mevalonate pathway; isopentenyl diphosphate from (R)-mevalonate: step 1/3. Farnesyl pyrophosphate and geranyl pyrophosphate inhibit mevalonate kinase activity by binding competitively at the ATP-binding sites. Catalyzes the phosphorylation of mevalonate to mevalonate 5-phosphate, a key step in isoprenoid and cholesterol biosynthesis. In Bos taurus (Bovine), this protein is Mevalonate kinase.